A 906-amino-acid polypeptide reads, in one-letter code: Cadherin-2 (906 aa).

A signal peptide spans 1 to 25; it reads MCRIAGAPRTLLPLLAALLQASVEA. The propeptide occupies 26-159; the sequence is SGEIALCKTG…HNGYLQRQKR (134 aa). Residues serine 96 and serine 135 each carry the phosphoserine modification. Cadherin domains lie at 160–267, 268–382, 383–497, 498–603, and 604–714; these read DWVI…RPEF, LHQV…PPEF, TAMT…NPYF, APNP…DNAP, and QVLP…DVDR. Residues 160 to 724 are Extracellular-facing; sequence DWVIPPINLP…IVGAGLGTGA (565 aa). Residue glutamate 170 coordinates Ca(2+). N-linked (GlcNAc...) asparagine glycosylation is present at asparagine 190. Ca(2+) is bound by residues aspartate 226, glutamate 228, aspartate 259, methionine 260, asparagine 261, aspartate 262, and asparagine 263. Asparagine 273 is a glycosylation site (N-linked (GlcNAc...) asparagine). Positions 293, 295, and 301 each coordinate Ca(2+). Asparagine 325 carries N-linked (GlcNAc...) asparagine glycosylation. A Ca(2+)-binding site is contributed by aspartate 353. N-linked (GlcNAc...) asparagine glycosylation is found at asparagine 402, asparagine 572, asparagine 622, asparagine 651, and asparagine 692. A helical membrane pass occupies residues 725–745; the sequence is IIAILLCIIILLILVLMFVVW. Residues 746–906 are Cytoplasmic-facing; sequence MKRRDKERQA…LAEMYGGGDD (161 aa). The segment covering 863 to 880 has biased composition (low complexity); that stretch reads SGSTAGSLSSLNSSSSGG. Residues 863–884 are disordered; sequence SGSTAGSLSSLNSSSSGGEQDY.

As to quaternary structure, homodimer (via extracellular region). Can also form heterodimers with other cadherins (via extracellular region). Dimerization occurs in trans, i.e. with a cadherin chain from another cell. Interacts with CDCP1. Interacts with PCDH8; this complex may also include TAOK2. The interaction with PCDH8 may lead to internalization through TAOK2/p38 MAPK pathway. Identified in a complex containing FGFR4, NCAM1, CDH2, PLCG1, FRS2, SRC, SHC1, GAP43 and CTTN. May interact with OBSCN (via protein kinase domain 2). Interacts with FBXO45. Post-translationally, cleaved by MMP24. Ectodomain cleavage leads to the generation of a soluble 90 kDa N-terminal soluble fragment and a 45 kDa membrane-bound C-terminal fragment 1 (CTF1), which is further cleaved by gamma-secretase into a 35 kDa. Cleavage in neural stem cells by MMP24 affects CDH2-mediated anchorage of neural stem cells to ependymocytes in the adult subependymal zone, leading to modulate neural stem cell quiescence. In terms of processing, may be phosphorylated by OBSCN.

It localises to the cell membrane. Its subcellular location is the sarcolemma. The protein localises to the cell junction. It is found in the cell surface. The protein resides in the desmosome. It localises to the adherens junction. Its function is as follows. Calcium-dependent cell adhesion protein; preferentially mediates homotypic cell-cell adhesion by dimerization with a CDH2 chain from another cell. Cadherins may thus contribute to the sorting of heterogeneous cell types. Acts as a regulator of neural stem cells quiescence by mediating anchorage of neural stem cells to ependymocytes in the adult subependymal zone: upon cleavage by MMP24, CDH2-mediated anchorage is affected, leading to modulate neural stem cell quiescence. Plays a role in cell-to-cell junction formation between pancreatic beta cells and neural crest stem (NCS) cells, promoting the formation of processes by NCS cells. Required for proper neurite branching. Required for pre- and postsynaptic organization. CDH2 may be involved in neuronal recognition mechanism. In hippocampal neurons, may regulate dendritic spine density. This Otolemur garnettii (Small-eared galago) protein is Cadherin-2 (CDH2).